Reading from the N-terminus, the 328-residue chain is MMENVFDYEDIQLIPAKCIVGSRAECDTSVELGGRTFKLPVVPANMQTIIDENIARYLAENDYFYIMHRFQPETRLAFVKDMHERGLYASISVGVKEEEYTFVQQLADQHVVPEYVTIDIAHGHSEAVINMIRHIKTHLPDSFVIAGNVGTPEAVRELEHAGADATKVGIGPGKVCITKIKTGFGTGGWQLAALRWCAKAASKPIIADGGIRTHGDIAKSVRFGATMVMIGSLFAGHEESPGDTIEKDGKLYKEYFGSASEYQKGERKNVEGKKMYVEHKGSLAETLLEMEQDLQSSISYAGGKRLDAIRNVDYVVVKNSIFNGDKIY.

Cysteine 176 (thioimidate intermediate) is an active-site residue. 205–228 (IIADGGIRTHGDIAKSVRFGATMV) provides a ligand contact to NADP(+).

The protein belongs to the IMPDH/GMPR family. GuaC type 2 subfamily.

It catalyses the reaction IMP + NH4(+) + NADP(+) = GMP + NADPH + 2 H(+). Functionally, catalyzes the irreversible NADPH-dependent deamination of GMP to IMP. It functions in the conversion of nucleobase, nucleoside and nucleotide derivatives of G to A nucleotides, and in maintaining the intracellular balance of A and G nucleotides. This chain is GMP reductase, found in Shouchella clausii (strain KSM-K16) (Alkalihalobacillus clausii).